The sequence spans 346 residues: Methylthioribose-1-phosphate isomerase (346 aa).

Residues 48 to 50, Arg-91, and Gln-196 each bind substrate; that span reads RGA. Catalysis depends on Asp-237, which acts as the Proton donor. 247-248 serves as a coordination point for substrate; it reads NK.

It belongs to the eIF-2B alpha/beta/delta subunits family. MtnA subfamily.

It carries out the reaction 5-(methylsulfanyl)-alpha-D-ribose 1-phosphate = 5-(methylsulfanyl)-D-ribulose 1-phosphate. It participates in amino-acid biosynthesis; L-methionine biosynthesis via salvage pathway; L-methionine from S-methyl-5-thio-alpha-D-ribose 1-phosphate: step 1/6. Catalyzes the interconversion of methylthioribose-1-phosphate (MTR-1-P) into methylthioribulose-1-phosphate (MTRu-1-P). This is Methylthioribose-1-phosphate isomerase from Thermosipho africanus (strain TCF52B).